The primary structure comprises 651 residues: Probable potassium transport system protein Kup (651 aa).

Helical transmembrane passes span 41–61 (LVLG…IYAF), 82–102 (VVSL…VLFV), 130–150 (LILG…VITP), 163–183 (IVAP…LVTL), 194–214 (VAIV…ASGL), 235–255 (FLTV…LAMT), 276–296 (WLWI…AFIL), 309–329 (MIPS…TVIA), 366–386 (IYIP…VLGF), 395–415 (AYGI…YIAM), 426–446 (ALPI…ANII), and 450–470 (EGGW…WTWV).

The protein belongs to the HAK/KUP transporter (TC 2.A.72) family.

The protein resides in the cell inner membrane. The enzyme catalyses K(+)(in) + H(+)(in) = K(+)(out) + H(+)(out). Functionally, transport of potassium into the cell. Likely operates as a K(+):H(+) symporter. The polypeptide is Probable potassium transport system protein Kup (Brucella abortus (strain S19)).